A 344-amino-acid chain; its full sequence is Methionine import ATP-binding protein MetN (344 aa).

The 240-residue stretch at 2–241 (IELQGLSQRF…PQHEVTRAMI (240 aa)) folds into the ABC transporter domain. 38–45 (GRSGAGKS) is a binding site for ATP.

This sequence belongs to the ABC transporter superfamily. Methionine importer (TC 3.A.1.24) family. In terms of assembly, the complex is composed of two ATP-binding proteins (MetN), two transmembrane proteins (MetI) and a solute-binding protein (MetQ).

The protein localises to the cell inner membrane. It catalyses the reaction L-methionine(out) + ATP + H2O = L-methionine(in) + ADP + phosphate + H(+). The catalysed reaction is D-methionine(out) + ATP + H2O = D-methionine(in) + ADP + phosphate + H(+). Part of the ABC transporter complex MetNIQ involved in methionine import. Responsible for energy coupling to the transport system. The protein is Methionine import ATP-binding protein MetN of Cupriavidus pinatubonensis (strain JMP 134 / LMG 1197) (Cupriavidus necator (strain JMP 134)).